The following is a 77-amino-acid chain: Conotoxin Vc6.14 (77 aa).

The first 19 residues, 1–19, serve as a signal peptide directing secretion; sequence MEKLTILLLVAAVLMSTQA. The propeptide occupies 20–37; that stretch reads MFQGGGEKRPKDKIKFLS. 3 disulfide bridges follow: Cys51–Cys65, Cys58–Cys69, and Cys64–Cys74.

Belongs to the conotoxin O2 superfamily. In terms of tissue distribution, expressed by the venom duct.

Its subcellular location is the secreted. Inhibits voltage-gated ion channels. This chain is Conotoxin Vc6.14, found in Conus victoriae (Queen Victoria cone).